Consider the following 94-residue polypeptide: Co-chaperonin GroES (94 aa).

The protein belongs to the GroES chaperonin family. Heptamer of 7 subunits arranged in a ring. Interacts with the chaperonin GroEL.

The protein localises to the cytoplasm. Together with the chaperonin GroEL, plays an essential role in assisting protein folding. The GroEL-GroES system forms a nano-cage that allows encapsulation of the non-native substrate proteins and provides a physical environment optimized to promote and accelerate protein folding. GroES binds to the apical surface of the GroEL ring, thereby capping the opening of the GroEL channel. The polypeptide is Co-chaperonin GroES (Latilactobacillus sakei subsp. sakei (strain 23K) (Lactobacillus sakei subsp. sakei)).